Consider the following 218-residue polypeptide: Transmembrane gamma-carboxyglutamic acid protein 1 (218 aa).

Residues 1-20 (MGRIFLTGEKANSVLKRYPR) constitute a propeptide that is removed on maturation. Residues 20-66 (RANGLFEEIRQGNIERECKEEVCTFEEAREAFENNEKTKEFWNTYTK) enclose the Gla domain. Residues 21 to 80 (ANGLFEEIRQGNIERECKEEVCTFEEAREAFENNEKTKEFWNTYTKAQQGESNRGSDWFQ) are Extracellular-facing. Cys37 and Cys42 are disulfide-bonded. A helical transmembrane segment spans residues 81–101 (FYLTFPLIFGLFIILLVIFLI). At 102 to 218 (WRCFLRNKTR…AMVPVATTIK (117 aa)) the chain is on the cytoplasmic side. Positions 160 to 192 (STRLSNCDPPPTYEEATGQMNLRRSETEPHLDP) are disordered. A compositionally biased stretch (basic and acidic residues) spans 182–192 (RRSETEPHLDP).

In terms of processing, gla residues are produced after subsequent post-translational modifications of glutamate by a vitamin K-dependent gamma-carboxylase.

It localises to the membrane. The protein is Transmembrane gamma-carboxyglutamic acid protein 1 (PRRG1) of Bos taurus (Bovine).